The primary structure comprises 187 residues: Ribose 1,5-bisphosphate phosphokinase PhnN (187 aa).

9–16 (GPSGSGKD) provides a ligand contact to ATP.

This sequence belongs to the ribose 1,5-bisphosphokinase family.

The catalysed reaction is alpha-D-ribose 1,5-bisphosphate + ATP = 5-phospho-alpha-D-ribose 1-diphosphate + ADP. Its pathway is metabolic intermediate biosynthesis; 5-phospho-alpha-D-ribose 1-diphosphate biosynthesis; 5-phospho-alpha-D-ribose 1-diphosphate from D-ribose 5-phosphate (route II): step 3/3. In terms of biological role, catalyzes the phosphorylation of ribose 1,5-bisphosphate to 5-phospho-D-ribosyl alpha-1-diphosphate (PRPP). This Desulfomicrobium baculatum (strain DSM 4028 / VKM B-1378 / X) (Desulfovibrio baculatus) protein is Ribose 1,5-bisphosphate phosphokinase PhnN.